Consider the following 516-residue polypeptide: Probable cytosol aminopeptidase (516 aa).

Residues Lys288 and Asp293 each coordinate Mn(2+). Lys300 is an active-site residue. Mn(2+)-binding residues include Asp311, Asp370, and Glu372. The active site involves Arg374.

The protein belongs to the peptidase M17 family. The cofactor is Mn(2+).

The protein localises to the cytoplasm. The catalysed reaction is Release of an N-terminal amino acid, Xaa-|-Yaa-, in which Xaa is preferably Leu, but may be other amino acids including Pro although not Arg or Lys, and Yaa may be Pro. Amino acid amides and methyl esters are also readily hydrolyzed, but rates on arylamides are exceedingly low.. It carries out the reaction Release of an N-terminal amino acid, preferentially leucine, but not glutamic or aspartic acids.. Presumably involved in the processing and regular turnover of intracellular proteins. Catalyzes the removal of unsubstituted N-terminal amino acids from various peptides. This chain is Probable cytosol aminopeptidase, found in Cupriavidus taiwanensis (strain DSM 17343 / BCRC 17206 / CCUG 44338 / CIP 107171 / LMG 19424 / R1) (Ralstonia taiwanensis (strain LMG 19424)).